Here is a 218-residue protein sequence, read N- to C-terminus: Oxygen regulatory protein NreC (218 aa).

The Response regulatory domain maps to 2-119 (KIVIADDHAV…QLILAVRTVY (118 aa)). At Asp53 the chain carries 4-aspartylphosphate. The HTH luxR-type domain occupies 149-214 (SSDPFKILSK…ELVEYALKKK (66 aa)). A DNA-binding region (H-T-H motif) is located at residues 173–192 (NKDIAEKLFVSVKTVEAHKT).

In terms of processing, phosphorylated by NreB.

It is found in the cytoplasm. Its function is as follows. Member of the two-component regulatory system NreB/NreC involved in the control of dissimilatory nitrate/nitrite reduction in response to oxygen. Phosphorylated NreC binds to a GC-rich palindromic sequence at the promoters of the nitrate (narGHJI) and nitrite (nir) reductase operons, as well as the putative nitrate transporter gene narT, and activates their expression. In Staphylococcus epidermidis (strain ATCC 35984 / DSM 28319 / BCRC 17069 / CCUG 31568 / BM 3577 / RP62A), this protein is Oxygen regulatory protein NreC (nreC).